The sequence spans 363 residues: DNA replication and repair protein RecF (363 aa).

Residue 30–37 (GDNAQGKT) participates in ATP binding.

It belongs to the RecF family.

It localises to the cytoplasm. In terms of biological role, the RecF protein is involved in DNA metabolism; it is required for DNA replication and normal SOS inducibility. RecF binds preferentially to single-stranded, linear DNA. It also seems to bind ATP. The protein is DNA replication and repair protein RecF of Syntrophotalea carbinolica (strain DSM 2380 / NBRC 103641 / GraBd1) (Pelobacter carbinolicus).